The sequence spans 386 residues: MATGDLKRSLRKLEQVLRSLNYPNEVDYVGLMKGDTAASLPIISYSLTSYSPHVAELLMESNIELIAKNDVRFTDTVYKLLRDQFDYKPILTKKQFIQSGFAEWKIEIVCDILNCVMKKHKKLIGLDKNSSCQRKKSISEKPEPCSSREKCPAEAVGIDVTGRFMTSGKKKAVVIRHLYTEENVGVPEGTVTSTEVSEGCDELEEQSSDIRIPEAQAPEVKAELQDMCDNPELTALQIALAECQEKLKKLTWIEKRLECLEATTKGKVMVDEKAWNNILSRVTLLETEMLLSKKNESVEPNTTSEDSESVSGVDVVPYDKKYSVEGPASTCHSSGYSTVSSATVPRSSTINYCGLNNFSEETTMQKMERMKKMFEETAELLKCSSR.

Residues 11–194 form a binds with microtubules and centrioles region; sequence RKLEQVLRSL…GVPEGTVTST (184 aa). A coiled-coil region spans residues 232-262; the sequence is ELTALQIALAECQEKLKKLTWIEKRLECLEA. Ser-329 bears the Phosphoserine mark. Residues 359-382 are a coiled coil; it reads SEETTMQKMERMKKMFEETAELLK.

In terms of assembly, interacts with CROCC. Interacts with POC1B; the interaction is direct and recruits POC1B to centriolar microtubules. Binds to centriolar microtubules.

It is found in the cytoplasm. The protein resides in the cytoskeleton. Its subcellular location is the microtubule organizing center. It localises to the centrosome. The protein localises to the centriole. It is found in the spindle pole. The protein resides in the midbody. Functionally, centriole-enriched microtubule-binding protein involved in centriole biogenesis. In collaboration with CEP295 and POC1B, is required for the centriole-to-centrosome conversion by ensuring the formation of bona fide centriole wall. Functions as a linker component that maintains centrosome cohesion. Associates with CROCC and regulates its stability and localization to the centrosome. The polypeptide is Centrosomal protein of 44 kDa (Cep44) (Rattus norvegicus (Rat)).